A 339-amino-acid chain; its full sequence is Ketol-acid reductoisomerase (NADP(+)) (339 aa).

The KARI N-terminal Rossmann domain occupies 1-182; it reads MRVYYDRDAD…GGGRSGVIET (182 aa). NADP(+) contacts are provided by residues 24–27, R48, S51, T53, and 83–86; these read YGSQ and DELQ. H108 is a catalytic residue. NADP(+) is bound at residue G134. Residues 183-328 enclose the KARI C-terminal knotted domain; the sequence is TFKEECETDL…GKLRAMMPWI (146 aa). 4 residues coordinate Mg(2+): D191, E195, E227, and E231. Residue S252 participates in substrate binding.

Belongs to the ketol-acid reductoisomerase family. It depends on Mg(2+) as a cofactor.

It catalyses the reaction (2R)-2,3-dihydroxy-3-methylbutanoate + NADP(+) = (2S)-2-acetolactate + NADPH + H(+). It carries out the reaction (2R,3R)-2,3-dihydroxy-3-methylpentanoate + NADP(+) = (S)-2-ethyl-2-hydroxy-3-oxobutanoate + NADPH + H(+). The protein operates within amino-acid biosynthesis; L-isoleucine biosynthesis; L-isoleucine from 2-oxobutanoate: step 2/4. It functions in the pathway amino-acid biosynthesis; L-valine biosynthesis; L-valine from pyruvate: step 2/4. Involved in the biosynthesis of branched-chain amino acids (BCAA). Catalyzes an alkyl-migration followed by a ketol-acid reduction of (S)-2-acetolactate (S2AL) to yield (R)-2,3-dihydroxy-isovalerate. In the isomerase reaction, S2AL is rearranged via a Mg-dependent methyl migration to produce 3-hydroxy-3-methyl-2-ketobutyrate (HMKB). In the reductase reaction, this 2-ketoacid undergoes a metal-dependent reduction by NADPH to yield (R)-2,3-dihydroxy-isovalerate. In Brucella suis (strain ATCC 23445 / NCTC 10510), this protein is Ketol-acid reductoisomerase (NADP(+)).